We begin with the raw amino-acid sequence, 462 residues long: ATP synthase subunit beta (462 aa).

Residue 151–158 (GGAGVGKT) participates in ATP binding.

Belongs to the ATPase alpha/beta chains family. In terms of assembly, F-type ATPases have 2 components, CF(1) - the catalytic core - and CF(0) - the membrane proton channel. CF(1) has five subunits: alpha(3), beta(3), gamma(1), delta(1), epsilon(1). CF(0) has four main subunits: a(1), b(1), b'(1) and c(9-12).

The protein localises to the cell inner membrane. It catalyses the reaction ATP + H2O + 4 H(+)(in) = ADP + phosphate + 5 H(+)(out). Its function is as follows. Produces ATP from ADP in the presence of a proton gradient across the membrane. The catalytic sites are hosted primarily by the beta subunits. This Chlorobium phaeobacteroides (strain DSM 266 / SMG 266 / 2430) protein is ATP synthase subunit beta.